The following is a 256-amino-acid chain: N-acetyl-D-glucosamine kinase (256 aa).

ATP is bound by residues 4–11 (GFDMGGTK) and 133–140 (GVGGGLIV). Zn(2+)-binding residues include histidine 157, cysteine 177, cysteine 179, and cysteine 184.

It belongs to the ROK (NagC/XylR) family. NagK subfamily.

It carries out the reaction N-acetyl-D-glucosamine + ATP = N-acetyl-D-glucosamine 6-phosphate + ADP + H(+). It functions in the pathway cell wall biogenesis; peptidoglycan recycling. Its function is as follows. Catalyzes the phosphorylation of N-acetyl-D-glucosamine (GlcNAc) derived from cell-wall degradation, yielding GlcNAc-6-P. The polypeptide is N-acetyl-D-glucosamine kinase (nagK) (Yersinia pestis bv. Antiqua (strain Nepal516)).